We begin with the raw amino-acid sequence, 167 residues long: uncharacterized protein (167 aa).

It localises to the mitochondrion. This is an uncharacterized protein from Ascobolus immersus.